The primary structure comprises 329 residues: Phosphate acetyltransferase (329 aa).

The protein belongs to the phosphate acetyltransferase and butyryltransferase family.

The protein resides in the cytoplasm. The catalysed reaction is acetyl-CoA + phosphate = acetyl phosphate + CoA. It functions in the pathway metabolic intermediate biosynthesis; acetyl-CoA biosynthesis; acetyl-CoA from acetate: step 2/2. The chain is Phosphate acetyltransferase (pta) from Staphylococcus epidermidis (strain ATCC 35984 / DSM 28319 / BCRC 17069 / CCUG 31568 / BM 3577 / RP62A).